We begin with the raw amino-acid sequence, 122 residues long: Small ribosomal subunit protein uS13 (122 aa).

A disordered region spans residues 93 to 122 (RRGLPVRGQRTKTNARTRKGPKKTIAGKKK).

This sequence belongs to the universal ribosomal protein uS13 family. Part of the 30S ribosomal subunit. Forms a loose heterodimer with protein S19. Forms two bridges to the 50S subunit in the 70S ribosome.

In terms of biological role, located at the top of the head of the 30S subunit, it contacts several helices of the 16S rRNA. In the 70S ribosome it contacts the 23S rRNA (bridge B1a) and protein L5 of the 50S subunit (bridge B1b), connecting the 2 subunits; these bridges are implicated in subunit movement. Contacts the tRNAs in the A and P-sites. The sequence is that of Small ribosomal subunit protein uS13 from Corynebacterium jeikeium (strain K411).